Reading from the N-terminus, the 846-residue chain is Protein kintoun (846 aa).

Disordered regions lie at residues 216–240 (TAEE…GKPE), 372–405 (LRHF…DSKA), 574–631 (QALK…ESAC), and 762–846 (KKNQ…EMDD). Over residues 372–382 (LRHFSREDSGV) the composition is skewed to basic and acidic residues. Phosphoserine is present on serine 380. Residues 391 to 400 (PVEEDPDGEL) show a composition bias toward acidic residues. Residues 583-603 (GTKEEEEKGNQDQEPESDKQH) are compositionally biased toward basic and acidic residues. Composition is skewed to basic residues over residues 611-622 (KAGKKQRKRNKK) and 762-776 (KKNQ…RAQQ). A Phosphoserine modification is found at serine 780. Residues 795–809 (LKQQENQSRNCNKPN) show a composition bias toward polar residues.

It belongs to the PIH1 family. Kintoun subfamily. Interacts with Pp1alpha-96A, Pp1-87B, Pp1-13C and flw.

The protein localises to the cytoplasm. In terms of biological role, required for cytoplasmic pre-assembly of axonemal dyneins, thereby playing a central role in motility in cilia and flagella. Involved in pre-assembly of dynein arm complexes in the cytoplasm before intraflagellar transport loads them for the ciliary compartment. This is Protein kintoun from Drosophila yakuba (Fruit fly).